A 614-amino-acid polypeptide reads, in one-letter code: Pyrophosphate--fructose 6-phosphate 1-phosphotransferase subunit alpha 1 (614 aa).

This sequence belongs to the phosphofructokinase type A (PFKA) family. PPi-dependent PFK group II subfamily. Clade 'Long' sub-subfamily. In terms of assembly, tetramer of two alpha (regulatory) and two beta (catalytic) chains. As to expression, expressed in leaves, roots, and flowers (e.g. sepals, petals, stamen and gynoecium).

Its subcellular location is the cytoplasm. It functions in the pathway carbohydrate degradation; glycolysis; D-glyceraldehyde 3-phosphate and glycerone phosphate from D-glucose: step 3/4. Its activity is regulated as follows. Allosterically activated by fructose 2,6-bisphosphate. In terms of biological role, regulatory subunit of pyrophosphate--fructose 6-phosphate 1-phosphotransferase. This is Pyrophosphate--fructose 6-phosphate 1-phosphotransferase subunit alpha 1 from Arabidopsis thaliana (Mouse-ear cress).